The following is a 341-amino-acid chain: Phenylalanine--tRNA ligase alpha subunit (341 aa).

Glutamate 256 is a binding site for Mg(2+).

Belongs to the class-II aminoacyl-tRNA synthetase family. Phe-tRNA synthetase alpha subunit type 1 subfamily. In terms of assembly, tetramer of two alpha and two beta subunits. Mg(2+) is required as a cofactor.

The protein resides in the cytoplasm. It carries out the reaction tRNA(Phe) + L-phenylalanine + ATP = L-phenylalanyl-tRNA(Phe) + AMP + diphosphate + H(+). The sequence is that of Phenylalanine--tRNA ligase alpha subunit from Leptospira interrogans serogroup Icterohaemorrhagiae serovar Lai (strain 56601).